Reading from the N-terminus, the 496-residue chain is MKKYILSLDQGTTSSRAILFNKKGEIVHSAQKEFTQHFPKPGWVEHNAQEIWGSILAVIATCLSEADVKPEQIAGIGITNQRETTVVWDKTTSKPIYNAIVWQSRQTAEICDELKEKGYSEMVREKTGLLIDAYFSGTKVKWILDNVEGAREKAENGDLLFGTIDSWLVWKLSGGKAHVTDYSNASRTLMFNIHDLQWDDELLEMLTVPKSMLPEVRPSSEIYGETIDYHFFGQNVPIAGVAGDQQAALFGQACFGEGMAKNTYGTGCFMLMNTGEKAVASEHGLLTTIAWGIDGKVNYALEGSIFVAGSAIQWLRDGMRMFKDASESEVYASRVESTDGVYVVPAFVGLGTPYWDSEVRGAMFGVTRGTTKEHFIRATLESLAYQTKDVLCAMEADSGIELKTLRVDGGAVKNNFLMKFQSDILDVPVERPVINETTALGAAYLAGLAVGYWKNQDEIKSQWHMDKRFEPTMEAETSEELYAGWKKAIEATKAFK.

T12 is an ADP binding site. Residues T12, T13, and S14 each contribute to the ATP site. T12 serves as a coordination point for sn-glycerol 3-phosphate. R16 serves as a coordination point for ADP. Sn-glycerol 3-phosphate contacts are provided by R82, E83, and Y134. Positions 82, 83, and 134 each coordinate glycerol. A Phosphohistidine; by HPr modification is found at H230. Residue D244 coordinates sn-glycerol 3-phosphate. Glycerol is bound by residues D244 and Q245. Residues T266 and G309 each coordinate ADP. ATP contacts are provided by T266, G309, Q313, and G410. 2 residues coordinate ADP: G410 and N414.

This sequence belongs to the FGGY kinase family. Homotetramer and homodimer (in equilibrium). In terms of processing, the phosphoenolpyruvate-dependent sugar phosphotransferase system (PTS), including enzyme I, and histidine-containing protein (HPr) are required for the phosphorylation, which leads to the activation of the enzyme.

It carries out the reaction glycerol + ATP = sn-glycerol 3-phosphate + ADP + H(+). The protein operates within polyol metabolism; glycerol degradation via glycerol kinase pathway; sn-glycerol 3-phosphate from glycerol: step 1/1. Its activity is regulated as follows. Activated by phosphorylation and inhibited by fructose 1,6-bisphosphate (FBP). In terms of biological role, key enzyme in the regulation of glycerol uptake and metabolism. Catalyzes the phosphorylation of glycerol to yield sn-glycerol 3-phosphate. In Bacillus cereus (strain G9842), this protein is Glycerol kinase.